The following is a 411-amino-acid chain: MDSDQGKLFVGGISWETDEDKLREHFTNYGEVSQAIVMRDKLTGRPRGFGFVIFSDPSVLDRVLQEKHSIDTREVDVKRAMSREEQQVSGRTGNLNTSRSSGGDAYNKTKKIFVGGLPPTLTDEEFRQYFEVYGPVTDVAIMYDQATNRPRGFGFVSFDSEDAVDSVLHKTFHDLSGKQVEVKRALPKDANPGGGGRSMGGGGSGGYQGYGGNESSYDGRMDSNRFLQHQSVGNGLPSYGSSGYGAGYGNGSNGAGYGAYGGYTGSAGGYGAGATAGYGATNIPGAGYGSSTGVAPRNSWDTPASSGYGNPGYGSGAAHSGYGVPGAAPPTQSPSGYSNQGYGYGGYSGSDSGYGNQAAYGVVGGRPSGGGSNNPGSGGYMGGGYGDGSWRSDPSQGYGGGYNDGQGRQGQ.

The RRM 1 domain maps to 6 to 82; that stretch reads GKLFVGGISW…REVDVKRAMS (77 aa). Disordered regions lie at residues 81-103, 183-221, and 358-411; these read MSRE…SSGG, KRAL…DGRM, and AAYG…RQGQ. The span at 87-101 shows a compositional bias: polar residues; it reads QVSGRTGNLNTSRSS. The RRM 2 domain maps to 110–187; it reads KKIFVGGLPP…KQVEVKRALP (78 aa). 3 stretches are compositionally biased toward gly residues: residues 192 to 212, 362 to 387, and 397 to 411; these read PGGG…GYGG, VVGG…GYGD, and GYGG…RQGQ. The tract at residues 341 to 390 is nuclear targeting sequence (M9); sequence GYGYGGYSGSDSGYGNQAAYGVVGGRPSGGGSNNPGSGGYMGGGYGDGSW.

In terms of assembly, component of the spliceosome. Interacts with TRN1.

It is found in the nucleus. Its subcellular location is the cytoplasm. Its function is as follows. Involved with pre-mRNA processing. Forms complexes (ribonucleosomes) with at least 20 other different hnRNP and heterogeneous nuclear RNA in the nucleus. Involved in the packaging of pre-mRNA into hnRNP particles, transport of poly(A) mRNA from the nucleus to the cytoplasm and may modulate splice site selection. The protein is Heterogeneous nuclear ribonucleoprotein 1 (RNP1) of Arabidopsis thaliana (Mouse-ear cress).